The chain runs to 46 residues: MKTWMYSYLFDCPILVLPWTPHNYYLYHRFHHFLPLCYWHYSADTY.

This is an uncharacterized protein from Saccharomyces cerevisiae (strain ATCC 204508 / S288c) (Baker's yeast).